The primary structure comprises 253 residues: Matrix protein (253 aa).

Residues 1 to 26 form a disordered region; that stretch reads MLSRIKQGIKTKRSSSSSSSRSKTGD. A PTAP/PSAP motif motif is present at residues 55–58; it reads PTAP.

In terms of assembly, homomultimer. Interacts with viral nucleocapsid. Interacts with host TSG101.

Its subcellular location is the virion membrane. The protein resides in the host endomembrane system. The protein localises to the host nucleus membrane. Its function is as follows. Plays a major role in assembly and budding of virion, by recruiting cellular partners of the ESCRT complexes that play a key role in releasing the budding particle from the host membrane. Condensates the ribonucleocapsid core during virus assembly. In Bos taurus (Bovine), this protein is Matrix protein (M).